Here is a 144-residue protein sequence, read N- to C-terminus: Putative golgin subfamily A member 2B (144 aa).

2 disordered regions span residues 1-20 and 95-132; these read MDSE…PEDL and SCGR…EAAG. The span at 110 to 131 shows a compositional bias: gly residues; sequence AEGGGVHQQAGPGQGRGEGEAA.

Belongs to the GOLGA2 family.

The polypeptide is Putative golgin subfamily A member 2B (GOLGA2P5) (Homo sapiens (Human)).